A 306-amino-acid chain; its full sequence is 4-hydroxy-3-methylbut-2-enyl diphosphate reductase (306 aa).

A [4Fe-4S] cluster-binding site is contributed by Cys12. (2E)-4-hydroxy-3-methylbut-2-enyl diphosphate is bound by residues His41 and His74. Dimethylallyl diphosphate is bound by residues His41 and His74. The isopentenyl diphosphate site is built by His41 and His74. Cys96 is a [4Fe-4S] cluster binding site. Position 124 (His124) interacts with (2E)-4-hydroxy-3-methylbut-2-enyl diphosphate. Residue His124 coordinates dimethylallyl diphosphate. His124 is an isopentenyl diphosphate binding site. Glu126 acts as the Proton donor in catalysis. Residue Thr164 participates in (2E)-4-hydroxy-3-methylbut-2-enyl diphosphate binding. Position 194 (Cys194) interacts with [4Fe-4S] cluster. (2E)-4-hydroxy-3-methylbut-2-enyl diphosphate is bound by residues Ser222, Ser223, Asn224, and Ser266. Residues Ser222, Ser223, Asn224, and Ser266 each contribute to the dimethylallyl diphosphate site. Isopentenyl diphosphate-binding residues include Ser222, Ser223, Asn224, and Ser266.

It belongs to the IspH family. [4Fe-4S] cluster serves as cofactor.

The catalysed reaction is isopentenyl diphosphate + 2 oxidized [2Fe-2S]-[ferredoxin] + H2O = (2E)-4-hydroxy-3-methylbut-2-enyl diphosphate + 2 reduced [2Fe-2S]-[ferredoxin] + 2 H(+). It catalyses the reaction dimethylallyl diphosphate + 2 oxidized [2Fe-2S]-[ferredoxin] + H2O = (2E)-4-hydroxy-3-methylbut-2-enyl diphosphate + 2 reduced [2Fe-2S]-[ferredoxin] + 2 H(+). Its pathway is isoprenoid biosynthesis; dimethylallyl diphosphate biosynthesis; dimethylallyl diphosphate from (2E)-4-hydroxy-3-methylbutenyl diphosphate: step 1/1. It participates in isoprenoid biosynthesis; isopentenyl diphosphate biosynthesis via DXP pathway; isopentenyl diphosphate from 1-deoxy-D-xylulose 5-phosphate: step 6/6. Catalyzes the conversion of 1-hydroxy-2-methyl-2-(E)-butenyl 4-diphosphate (HMBPP) into a mixture of isopentenyl diphosphate (IPP) and dimethylallyl diphosphate (DMAPP). Acts in the terminal step of the DOXP/MEP pathway for isoprenoid precursor biosynthesis. This chain is 4-hydroxy-3-methylbut-2-enyl diphosphate reductase, found in Dechloromonas aromatica (strain RCB).